Consider the following 281-residue polypeptide: Cytochrome c oxidase subunit 3 (281 aa).

At 1–15 (MTHQTHAYHMVNPSP) the chain is on the mitochondrial matrix side. The chain crosses the membrane as a helical span at residues 16–34 (WPLTGALSALLLTSGLIMW). The Mitochondrial intermembrane portion of the chain corresponds to 35–40 (FHYNSS). A helical transmembrane segment spans residues 41-66 (TLMFMGLTTMLLTMYQWWRDIIREGT). Topologically, residues 67–72 (FQGHHT) are mitochondrial matrix. The helical transmembrane segment at 73 to 105 (PVVQKGLRYGMILFILSEVFFFIGFFWAFYHSS) threads the bilayer. Topologically, residues 106–128 (LAPTPELGGCWPPTGIHPLNPLE) are mitochondrial intermembrane. A helical transmembrane segment spans residues 129–152 (VPLLNTSILLASGVSITWAHHSLM). The Mitochondrial matrix portion of the chain corresponds to 153–155 (EGN). Residues 156–183 (RKQMIQALLITISLGLYFTILQAMEYYE) traverse the membrane as a helical segment. At 184-190 (ASFTISD) the chain is on the mitochondrial intermembrane side. A helical transmembrane segment spans residues 191–223 (GVYGSTFFVATGFHGLHVIIGSTFLIVCLLRQL). At 224 to 232 (FYHFTSTHH) the chain is on the mitochondrial matrix side. Residues 233–256 (FGFEAAAWYWHFVDVVWLFLYVSI) form a helical membrane-spanning segment. The Mitochondrial intermembrane segment spans residues 257-281 (YWWGSYFSSMISTTDFQSLSSGSNQ).

It belongs to the cytochrome c oxidase subunit 3 family. Component of the cytochrome c oxidase (complex IV, CIV), a multisubunit enzyme composed of 14 subunits. The complex is composed of a catalytic core of 3 subunits MT-CO1, MT-CO2 and MT-CO3, encoded in the mitochondrial DNA, and 11 supernumerary subunits COX4I, COX5A, COX5B, COX6A, COX6B, COX6C, COX7A, COX7B, COX7C, COX8 and NDUFA4, which are encoded in the nuclear genome. The complex exists as a monomer or a dimer and forms supercomplexes (SCs) in the inner mitochondrial membrane with NADH-ubiquinone oxidoreductase (complex I, CI) and ubiquinol-cytochrome c oxidoreductase (cytochrome b-c1 complex, complex III, CIII), resulting in different assemblies (supercomplex SCI(1)III(2)IV(1) and megacomplex MCI(2)III(2)IV(2)).

The protein localises to the mitochondrion inner membrane. It carries out the reaction 4 Fe(II)-[cytochrome c] + O2 + 8 H(+)(in) = 4 Fe(III)-[cytochrome c] + 2 H2O + 4 H(+)(out). Component of the cytochrome c oxidase, the last enzyme in the mitochondrial electron transport chain which drives oxidative phosphorylation. The respiratory chain contains 3 multisubunit complexes succinate dehydrogenase (complex II, CII), ubiquinol-cytochrome c oxidoreductase (cytochrome b-c1 complex, complex III, CIII) and cytochrome c oxidase (complex IV, CIV), that cooperate to transfer electrons derived from NADH and succinate to molecular oxygen, creating an electrochemical gradient over the inner membrane that drives transmembrane transport and the ATP synthase. Cytochrome c oxidase is the component of the respiratory chain that catalyzes the reduction of oxygen to water. Electrons originating from reduced cytochrome c in the intermembrane space (IMS) are transferred via the dinuclear copper A center (CU(A)) of subunit 2 and heme A of subunit 1 to the active site in subunit 1, a binuclear center (BNC) formed by heme A3 and copper B (CU(B)). The BNC reduces molecular oxygen to 2 water molecules using 4 electrons from cytochrome c in the IMS and 4 protons from the mitochondrial matrix. The sequence is that of Cytochrome c oxidase subunit 3 (MT-CO3) from Didelphis virginiana (North American opossum).